The following is a 253-amino-acid chain: Triosephosphate isomerase (253 aa).

A substrate-binding site is contributed by 9 to 11; it reads NWK. Residue histidine 94 is the Electrophile of the active site. The active-site Proton acceptor is glutamate 163. Substrate is bound by residues glycine 169, serine 209, and 230-231; that span reads GG.

The protein belongs to the triosephosphate isomerase family. Homodimer.

Its subcellular location is the cytoplasm. It catalyses the reaction D-glyceraldehyde 3-phosphate = dihydroxyacetone phosphate. It functions in the pathway carbohydrate biosynthesis; gluconeogenesis. The protein operates within carbohydrate degradation; glycolysis; D-glyceraldehyde 3-phosphate from glycerone phosphate: step 1/1. Functionally, involved in the gluconeogenesis. Catalyzes stereospecifically the conversion of dihydroxyacetone phosphate (DHAP) to D-glyceraldehyde-3-phosphate (G3P). This Dehalococcoides mccartyi (strain CBDB1) protein is Triosephosphate isomerase.